Here is a 186-residue protein sequence, read N- to C-terminus: TATA box-binding protein-like 1 (186 aa).

It belongs to the TBP family. In terms of tissue distribution, expressed ubiquitously with highest expression in the ovary and testis.

It is found in the cytoplasm. The protein resides in the nucleus. In terms of biological role, part of a specialized transcription system that mediates the transcription of most ribosomal proteins through the 5'-TCT-3' motif which is a core promoter element at these genes. Seems to also mediate the transcription of NF1. Does not bind the TATA box. Members of the TBP family are differentially required to regulate transcription and development during early embryogenesis. Particularly regulates genes that have a role in catabolism. The chain is TATA box-binding protein-like 1 (tbpl1) from Xenopus laevis (African clawed frog).